The chain runs to 966 residues: LRR receptor-like serine/threonine-protein kinase ERL1 (966 aa).

The first 25 residues, 1-25 (MKEKMQRMVLSLAMVGFMVFGVASA), serve as a signal peptide directing secretion. Residues 26 to 582 (MNNEGKALMA…PLPKSRVFSR (557 aa)) are Extracellular-facing. The LRR 1 repeat unit spans residues 40 to 63 (FSNLVNMLLDWDDVHNSDLCSWRG). N-linked (GlcNAc...) asparagine glycosylation is found at Asn68 and Asn77. LRR repeat units lie at residues 75-94 (SLNLSSLNLGGEISPAIGDL), 95-118 (RNLQSIDLQGNKLAGQIPDEIGNC), 120-142 (SLVYLDLSENLLYGDIPFSISKL), 143-166 (KQLETLNLKNNQLTGPVPATLTQI), 168-190 (NLKRLDLAGNHLTGEISRLLYWN), 192-214 (VLQYLGLRGNMLTGTLSSDMCQL), 215-238 (TGLWYFDVRGNNLTGTIPESIGNC), 239-261 (TSFQILDISYNQITGEIPYNIGF), 262-285 (LQVATLSLQGNRLTGRIPEVIGLM), 286-311 (QALAVLDLSDNELVGPIPPILGNLSF), 313-333 (GKLYLHGNMLTGPIPSELGNM), 334-357 (SRLSYLQLNDNKLVGTIPPELGKL), 359-381 (QLFELNLANNRLVGPIPSNISSC), 383-404 (ALNQFNVHGNLLSGSIPLAFRN), 405-429 (LGSLTYLNLSSNNFKGKIPVELGHI), 431-453 (NLDKLDLSGNNFSGSIPLTLGDL), 454-476 (EHLLILNLSRNHLSGQLPAEFGN), 478-500 (RSIQMIDVSFNLLSGVIPTELGQ), 501-525 (LQNLNSLILNNNKLHGKIPDQLTNC), and 527-550 (TLVNLNVSFNNLSGIVPPMKNFSR). N-linked (GlcNAc...) asparagine glycosylation is found at Asn226 and Asn237. Asn308 and Asn332 each carry an N-linked (GlcNAc...) asparagine glycan. A glycan (N-linked (GlcNAc...) asparagine) is linked at Asn377. 3 N-linked (GlcNAc...) asparagine glycosylation sites follow: Asn412, Asn441, and Asn460. Residues Asn532, Asn537, and Asn547 are each glycosylated (N-linked (GlcNAc...) asparagine). A helical membrane pass occupies residues 583-603 (GALICIVLGVITLLCMIFLAV). At 604 to 966 (YKSMQQKKIL…FREVISKSSI (363 aa)) the chain is on the cytoplasmic side. A phosphothreonine mark is found at Thr637 and Thr645. The Protein kinase domain occupies 648–921 (LNEKFIIGYG…RVLLSLVPSL (274 aa)). ATP contacts are provided by residues 654 to 662 (IGYGASSTV) and Lys676. Phosphotyrosine is present on residues Tyr721 and Tyr760. Asp773 acts as the Proton acceptor in catalysis. Tyr815 is subject to Phosphotyrosine. Phosphothreonine is present on Thr823.

Belongs to the protein kinase superfamily. Ser/Thr protein kinase family. In terms of assembly, homodimer and heterodimer with ERECTA and TMM. Interacts with EPF1 and EPF2. Interacts with SERK1, SERK2, SERK3/BAK1 and SERK4 in a EPF1-induced manner. In terms of tissue distribution, mostly expressed in developing organs, including bud clusters, flowers, siliques and young rosettes. Also detected in mature aboveground organs, such as leaves, stems and pedicels, but barely in roots.

It is found in the cell membrane. The enzyme catalyses L-seryl-[protein] + ATP = O-phospho-L-seryl-[protein] + ADP + H(+). It carries out the reaction L-threonyl-[protein] + ATP = O-phospho-L-threonyl-[protein] + ADP + H(+). Functionally, receptor kinase that regulates inflorescence architecture and organ shape as well as stomatal patterning, including density and clustering, together with ER and ERL2. Redundantly involved with ER in procambial development regulation. Forms a functional ligand-receptor pair with EPF1 (AC Q8S8I4). Forms a constitutive complex with TMM involved in the recognition of the stomatal regulatory peptides EPF1, EPF2 and EPFL9/STOMAGEN. The protein is LRR receptor-like serine/threonine-protein kinase ERL1 of Arabidopsis thaliana (Mouse-ear cress).